The chain runs to 226 residues: Deoxyribose-phosphate aldolase (226 aa).

The active-site Proton donor/acceptor is the E96. K157 functions as the Schiff-base intermediate with acetaldehyde in the catalytic mechanism. K185 (proton donor/acceptor) is an active-site residue.

This sequence belongs to the DeoC/FbaB aldolase family. DeoC type 1 subfamily.

The protein resides in the cytoplasm. The catalysed reaction is 2-deoxy-D-ribose 5-phosphate = D-glyceraldehyde 3-phosphate + acetaldehyde. It functions in the pathway carbohydrate degradation; 2-deoxy-D-ribose 1-phosphate degradation; D-glyceraldehyde 3-phosphate and acetaldehyde from 2-deoxy-alpha-D-ribose 1-phosphate: step 2/2. Its function is as follows. Catalyzes a reversible aldol reaction between acetaldehyde and D-glyceraldehyde 3-phosphate to generate 2-deoxy-D-ribose 5-phosphate. The chain is Deoxyribose-phosphate aldolase from Gloeobacter violaceus (strain ATCC 29082 / PCC 7421).